A 164-amino-acid chain; its full sequence is Cyclic pyranopterin monophosphate synthase (164 aa).

Residues 75–77 and 116–117 contribute to the substrate site; these read MCH and ME. Asp131 is a catalytic residue.

Belongs to the MoaC family. In terms of assembly, homohexamer; trimer of dimers.

The enzyme catalyses (8S)-3',8-cyclo-7,8-dihydroguanosine 5'-triphosphate = cyclic pyranopterin phosphate + diphosphate. The protein operates within cofactor biosynthesis; molybdopterin biosynthesis. Functionally, catalyzes the conversion of (8S)-3',8-cyclo-7,8-dihydroguanosine 5'-triphosphate to cyclic pyranopterin monophosphate (cPMP). This Staphylococcus aureus (strain USA300) protein is Cyclic pyranopterin monophosphate synthase.